The sequence spans 127 residues: Large ribosomal subunit protein bL12 (127 aa).

The protein belongs to the bacterial ribosomal protein bL12 family. In terms of assembly, homodimer. Part of the ribosomal stalk of the 50S ribosomal subunit. Forms a multimeric L10(L12)X complex, where L10 forms an elongated spine to which 2 to 4 L12 dimers bind in a sequential fashion. Binds GTP-bound translation factors.

Functionally, forms part of the ribosomal stalk which helps the ribosome interact with GTP-bound translation factors. Is thus essential for accurate translation. The sequence is that of Large ribosomal subunit protein bL12 from Streptomyces griseus subsp. griseus (strain JCM 4626 / CBS 651.72 / NBRC 13350 / KCC S-0626 / ISP 5235).